A 363-amino-acid polypeptide reads, in one-letter code: Trans-2,3-enoyl-CoA reductase-like (363 aa).

At Ser37 the chain carries Phosphoserine. Helical transmembrane passes span 143 to 163 (WTTV…LFYL), 217 to 237 (LIMS…YINH), and 311 to 331 (ISFT…LMSI).

Belongs to the steroid 5-alpha reductase family. In terms of tissue distribution, predominantly expressed in the heart and skeletal muscle.

It is found in the membrane. It localises to the endoplasmic reticulum. This Homo sapiens (Human) protein is Trans-2,3-enoyl-CoA reductase-like (TECRL).